A 361-amino-acid chain; its full sequence is ATP phosphoribosyltransferase regulatory subunit (361 aa).

The protein belongs to the class-II aminoacyl-tRNA synthetase family. HisZ subfamily. Heteromultimer composed of HisG and HisZ subunits.

The protein localises to the cytoplasm. It functions in the pathway amino-acid biosynthesis; L-histidine biosynthesis; L-histidine from 5-phospho-alpha-D-ribose 1-diphosphate: step 1/9. Required for the first step of histidine biosynthesis. May allow the feedback regulation of ATP phosphoribosyltransferase activity by histidine. The polypeptide is ATP phosphoribosyltransferase regulatory subunit (Thermus thermophilus (strain ATCC 27634 / DSM 579 / HB8)).